A 131-amino-acid chain; its full sequence is Ponticulin-like protein M (131 aa).

Residues 1-19 (MKFLSTLILLLSVLALVRG) form the signal peptide. S106 carries GPI-like-anchor amidated serine lipidation. The propeptide at 107–131 (NSASSPLTTAVLFVVAFAAAIALLL) is removed in mature form.

It belongs to the ponticulin family. Post-translationally, the GPI-like-anchor contains a phosphoceramide group, rather than a phosphatidyl group.

The protein resides in the cell membrane. Its function is as follows. Binds F-actin and nucleates actin assembly. The sequence is that of Ponticulin-like protein M (ponM) from Dictyostelium discoideum (Social amoeba).